The primary structure comprises 283 residues: uncharacterized protein (283 aa).

A run of 5 helical transmembrane segments spans residues 8 to 28 (LILS…IGYV), 38 to 58 (GIHS…VKIA), 73 to 93 (FECL…YEIG), 100 to 120 (IIYG…ILSI), and 175 to 195 (AIAG…ICLT).

This sequence belongs to the cation diffusion facilitator (CDF) transporter (TC 2.A.4) family.

The protein resides in the cell membrane. This is an uncharacterized protein from Methanocaldococcus jannaschii (strain ATCC 43067 / DSM 2661 / JAL-1 / JCM 10045 / NBRC 100440) (Methanococcus jannaschii).